The following is a 410-amino-acid chain: MASVAASSSISFAASFLKIKAFPLSPRFFPIRTLRCSVSSSSSEPIEFDISFAPPKPKPSSTHGGVTPQQLFIPWIVRSDDGTLKLQSQPPARLIHNLAIDATTQNPKKKDKSKKKQPQATSSSSATTTASSPASHSEVKPKLSKAARRFYNENFKEQPQRLSKVLAAAGVASRRTSEELIFDGKVTVNGILCNTPQTRVDPSRDIIYVNGNRIPKKLPPKVYFALNKPKGYICSSGEKEIKSAISLFDEYLSSWDKRNPGTPKPRLFTVGRLDVATTGLIVVTNDGDFAQKLSHPSSSLPKEYITTVVGDIHKRHLMAISEGTMVEGVHCVPDSVELMPKQHDIPRARLRIVVHEGRNHEVRELVKNAGLEVHSLKRVRIGGFRLPSDLGLGKHVELKQSELKALGWKN.

Residues 1 to 35 (MASVAASSSISFAASFLKIKAFPLSPRFFPIRTLR) constitute a chloroplast transit peptide. The tract at residues 96–143 (HNLAIDATTQNPKKKDKSKKKQPQATSSSSATTTASSPASHSEVKPKL) is disordered. A compositionally biased stretch (basic residues) spans 107–117 (PKKKDKSKKKQ). Positions 118–135 (PQATSSSSATTTASSPAS) are enriched in low complexity. The S4 RNA-binding domain maps to 160–229 (QRLSKVLAAA…PKVYFALNKP (70 aa)). The active-site Nucleophile is the Asp-274.

The protein belongs to the pseudouridine synthase RsuA family. In terms of tissue distribution, highly expressed in young seedlings. Expressed in roots, rosette leaves, cauline leaves, stems and flowers.

Its subcellular location is the plastid. It is found in the chloroplast. Its function is as follows. Responsible for synthesis of pseudouridine in chloroplastic 23S ribosomal RNA. Necessary for normal chloroplast rRNA processing and translation. Required for normal chloroplast development and maintenance. May function in other plastids, such as root amyloplasts. In Arabidopsis thaliana (Mouse-ear cress), this protein is Putative ribosomal large subunit pseudouridine synthase SVR1, chloroplastic (SVR1).